The chain runs to 233 residues: Urease accessory protein UreF (233 aa).

Belongs to the UreF family. UreD, UreF and UreG form a complex that acts as a GTP-hydrolysis-dependent molecular chaperone, activating the urease apoprotein by helping to assemble the nickel containing metallocenter of UreC. The UreE protein probably delivers the nickel.

Its subcellular location is the cytoplasm. Functionally, required for maturation of urease via the functional incorporation of the urease nickel metallocenter. The chain is Urease accessory protein UreF from Polaromonas sp. (strain JS666 / ATCC BAA-500).